A 63-amino-acid polypeptide reads, in one-letter code: Cytotoxin homolog S3C2 (63 aa).

4 disulfides stabilise this stretch: C3–C22, C15–C40, C44–C55, and C56–C61.

The protein belongs to the three-finger toxin family. Short-chain subfamily. Orphan group XVI sub-subfamily. As to expression, expressed by the venom gland.

It is found in the secreted. This Aspidelaps scutatus (Shield-nose snake) protein is Cytotoxin homolog S3C2.